Reading from the N-terminus, the 438-residue chain is Exoglucanase 3 (438 aa).

The first 20 residues, 1 to 20 (MFKFAALLALASLVPGFVQA), serve as a signal peptide directing secretion. The CBM1 domain maps to 21 to 59 (QSPVWGQCGGNGWTGPTTCASGSTCVKQNDFYSQCLPNN). Cystine bridges form between cysteine 28–cysteine 45 and cysteine 39–cysteine 55. The segment at 57–90 (PNNQAPPSTTTQPGTTPPATTTSGGTGPTSGAGN) is disordered. The linker stretch occupies residues 60 to 87 (QAPPSTTTQPGTTPPATTTSGGTGPTSG). Residues 61 to 79 (APPSTTTQPGTTPPATTTS) are compositionally biased toward low complexity. The tract at residues 88-438 (AGNPYTGKTV…TLVANANPAL (351 aa)) is catalytic. 2 cysteine pairs are disulfide-bonded: cysteine 170–cysteine 229 and cysteine 360–cysteine 407. The Proton donor role is filled by aspartate 215. Aspartate 393 (nucleophile) is an active-site residue.

This sequence belongs to the glycosyl hydrolase 6 (cellulase B) family.

It catalyses the reaction Hydrolysis of (1-&gt;4)-beta-D-glucosidic linkages in cellulose and cellotetraose, releasing cellobiose from the non-reducing ends of the chains.. Shows enzymatic activity towards crystalline cellulose. At long reaction times. It is also able to degrade carboxymethyl cellulose and barley B-glucan. The sequence is that of Exoglucanase 3 (cel3) from Agaricus bisporus (White button mushroom).